We begin with the raw amino-acid sequence, 122 residues long: Hydrogenase maturation factor HypA (122 aa).

H2 is a binding site for Ni(2+). Zn(2+) is bound by residues C73, C75, C95, and C98.

This sequence belongs to the HypA/HybF family.

Functionally, involved in the maturation of [NiFe] hydrogenases. Required for nickel insertion into the metal center of the hydrogenase. The protein is Hydrogenase maturation factor HypA of Methanothermobacter thermautotrophicus (strain ATCC 29096 / DSM 1053 / JCM 10044 / NBRC 100330 / Delta H) (Methanobacterium thermoautotrophicum).